We begin with the raw amino-acid sequence, 279 residues long: 2-dehydro-3-deoxyphosphooctonate aldolase (279 aa).

This sequence belongs to the KdsA family.

The protein localises to the cytoplasm. The enzyme catalyses D-arabinose 5-phosphate + phosphoenolpyruvate + H2O = 3-deoxy-alpha-D-manno-2-octulosonate-8-phosphate + phosphate. It participates in carbohydrate biosynthesis; 3-deoxy-D-manno-octulosonate biosynthesis; 3-deoxy-D-manno-octulosonate from D-ribulose 5-phosphate: step 2/3. It functions in the pathway bacterial outer membrane biogenesis; lipopolysaccharide biosynthesis. This Aromatoleum aromaticum (strain DSM 19018 / LMG 30748 / EbN1) (Azoarcus sp. (strain EbN1)) protein is 2-dehydro-3-deoxyphosphooctonate aldolase.